Here is a 105-residue protein sequence, read N- to C-terminus: Serine protease inhibitor Kazal-type 8 (105 aa).

A signal peptide spans 1 to 21 (MKVIFSVAVLVLASSVWTSLA). 3 disulfides stabilise this stretch: Cys44/Cys78, Cys51/Cys75, and Cys64/Cys96. One can recognise a Kazal-like domain in the interval 44–98 (CIKNIQLCWILSYFKVSEPICGSNQVTYEGECHLCSGILYEDRTVIKVHDGPCEH).

As to expression, expressed in epydiymis, in the cauda, corpus and caput.

It is found in the secreted. Its function is as follows. Probable serine protease inhibitor. This chain is Serine protease inhibitor Kazal-type 8 (Spink8), found in Mus musculus (Mouse).